The primary structure comprises 343 residues: Protein RecA (343 aa).

64–71 (GPESSGKT) contacts ATP.

Belongs to the RecA family.

The protein localises to the cytoplasm. Can catalyze the hydrolysis of ATP in the presence of single-stranded DNA, the ATP-dependent uptake of single-stranded DNA by duplex DNA, and the ATP-dependent hybridization of homologous single-stranded DNAs. It interacts with LexA causing its activation and leading to its autocatalytic cleavage. The sequence is that of Protein RecA from Bacillus mycoides (strain KBAB4) (Bacillus weihenstephanensis).